A 331-amino-acid chain; its full sequence is CRISPR-associated endonuclease Cas1 (331 aa).

3 residues coordinate Mn(2+): Glu155, His221, and Glu236.

The protein belongs to the CRISPR-associated endonuclease Cas1 family. Homodimer, forms a heterotetramer with a Cas2 homodimer. It depends on Mg(2+) as a cofactor. The cofactor is Mn(2+).

Functionally, CRISPR (clustered regularly interspaced short palindromic repeat), is an adaptive immune system that provides protection against mobile genetic elements (viruses, transposable elements and conjugative plasmids). CRISPR clusters contain spacers, sequences complementary to antecedent mobile elements, and target invading nucleic acids. CRISPR clusters are transcribed and processed into CRISPR RNA (crRNA). Acts as a dsDNA endonuclease. Involved in the integration of spacer DNA into the CRISPR cassette. In Methanopyrus kandleri (strain AV19 / DSM 6324 / JCM 9639 / NBRC 100938), this protein is CRISPR-associated endonuclease Cas1.